Consider the following 242-residue polypeptide: MRGGVGTTTITAALAWSLQMLGENVLVVDACPDNLLRLSFNVDFTHRQGWARAMLDGQDWRDAGLRYTSQLDLLPFGQLSIEEQENPQHWQTRLSDICSGLQQLKASGRYQWILIDLPRDASQITHQLLSLCDHSLAIVNVDANCHIRLHQQALPDGAHILINDFRIGSQVQDDIYQLWLQSQRRLLPMLIHRDEAMAECLAAKQPVGEYRSDALAAEEILTLANWCLLNYSGLKTPVGSAS.

1–8 contributes to the ATP binding site; it reads MRGGVGTT.

It belongs to the BcsQ family.

In terms of biological role, a C-terminal pseudogene fragment of BcsQ, which has a premature stop codon at position 6 of the intact protein. The mutation prevents cellulose synthesis, and has polar effects on transcription of downstream gene bcsA and probably also bcsB, bcsZ and bcsC. When the reading frame is restored cellulose biosynthesis is also restored, see (AC P0DP92) for an intact protein. May play a role in subcellular localization of an active cellulose biosynthesis apparatus at the bacterial cell pole. The protein is Putative cellulose biosynthesis protein BcsQ (bcsQ) of Escherichia coli (strain K12).